Reading from the N-terminus, the 598-residue chain is MNRIRNFSIIAHIDHGKSTLSDRLIQVSGIVAARDFRDQILDSMDLERERGITIKSQTICLPYKAKDGAVYSLNLIDTPGHVDFSYEVSRAIASCEGALILIDASQGVEAQTVANLYLAVDHDLEIIPVINKIDLISADVERVMEQIEEDLGLDSSAAVKVSAKEGVGIEDLMETIVAKLPPPKGNLEAPLQALIFDSTYDDFRGTVIHVRVFEGKVKPGDMIMFMSNDSVYKVEEVGIFQIVRKPRKVLAAGEVGYIIAGIKSLSDTRCGDTITLKTNRCAAAMPGFREAKPVVFSSIFPIGSDEYEDLATAIDKLKLNDASLVYEKTSSLALGFGFRCGFLGLLHLEIVQERLEREYDQSLIITAPTVRYEVVYHDGTSMFIDNPELFPDPTLIQTTREPFIKASIIIPDKYMGAVMTLCMERRGISTTYHYLTGSRMEMVFELPLAEVMYDFYDKLKTVTQGYGSFDYEMLDYRDSRLVKLDILVNGERVDALSQLAHEDKAVERARHACKMLSEEIPRQMFKIPIQGAIGGKIISRETISALRKDVTAKCYGGDISRKRKLLEKQKKGKKRMKTIGKVAIPQSAFLAVLKSDQT.

Residues 2–184 (NRIRNFSIIA…TIVAKLPPPK (183 aa)) enclose the tr-type G domain. Residues 14 to 19 (DHGKST) and 131 to 134 (NKID) contribute to the GTP site.

This sequence belongs to the TRAFAC class translation factor GTPase superfamily. Classic translation factor GTPase family. LepA subfamily.

It is found in the cell inner membrane. The catalysed reaction is GTP + H2O = GDP + phosphate + H(+). Required for accurate and efficient protein synthesis under certain stress conditions. May act as a fidelity factor of the translation reaction, by catalyzing a one-codon backward translocation of tRNAs on improperly translocated ribosomes. Back-translocation proceeds from a post-translocation (POST) complex to a pre-translocation (PRE) complex, thus giving elongation factor G a second chance to translocate the tRNAs correctly. Binds to ribosomes in a GTP-dependent manner. The sequence is that of Elongation factor 4 from Desulfosudis oleivorans (strain DSM 6200 / JCM 39069 / Hxd3) (Desulfococcus oleovorans).